The sequence spans 460 residues: Argininosuccinate lyase (460 aa).

Belongs to the lyase 1 family. Argininosuccinate lyase subfamily.

Its subcellular location is the cytoplasm. The enzyme catalyses 2-(N(omega)-L-arginino)succinate = fumarate + L-arginine. It functions in the pathway amino-acid biosynthesis; L-arginine biosynthesis; L-arginine from L-ornithine and carbamoyl phosphate: step 3/3. The polypeptide is Argininosuccinate lyase (Nitratidesulfovibrio vulgaris (strain ATCC 29579 / DSM 644 / CCUG 34227 / NCIMB 8303 / VKM B-1760 / Hildenborough) (Desulfovibrio vulgaris)).